Here is a 346-residue protein sequence, read N- to C-terminus: Phosphoribosylformylglycinamidine cyclo-ligase (346 aa).

This sequence belongs to the AIR synthase family.

The protein localises to the cytoplasm. It carries out the reaction 2-formamido-N(1)-(5-O-phospho-beta-D-ribosyl)acetamidine + ATP = 5-amino-1-(5-phospho-beta-D-ribosyl)imidazole + ADP + phosphate + H(+). The protein operates within purine metabolism; IMP biosynthesis via de novo pathway; 5-amino-1-(5-phospho-D-ribosyl)imidazole from N(2)-formyl-N(1)-(5-phospho-D-ribosyl)glycinamide: step 2/2. This is Phosphoribosylformylglycinamidine cyclo-ligase from Prochlorococcus marinus (strain NATL1A).